The primary structure comprises 512 residues: Probable capsid protein 4 (512 aa).

The protein belongs to the NCLDV major capsid protein family.

The protein resides in the virion. This chain is Probable capsid protein 4, found in Acanthamoeba polyphaga mimivirus (APMV).